Here is a 216-residue protein sequence, read N- to C-terminus: Ceramide-1-phosphate transfer protein (216 aa).

Residues Asp-56, Lys-60, Arg-108, Arg-112, and His-152 each coordinate an N-acylsphingoid base 1-phosphate.

This sequence belongs to the GLTP family.

It is found in the cytoplasm. It localises to the cytosol. The protein resides in the golgi apparatus. Its subcellular location is the trans-Golgi network membrane. The protein localises to the cell membrane. It is found in the endosome membrane. It localises to the nucleus outer membrane. The catalysed reaction is N-(hexadecanoyl)-sphing-4-enine-1-phosphate(in) = N-(hexadecanoyl)-sphing-4-enine-1-phosphate(out). The enzyme catalyses N-(9Z-octadecenoyl)-sphing-4-enine-1-phosphate(in) = N-(9Z-octadecenoyl)-sphing-4-enine-1-phosphate(out). Its function is as follows. Mediates the intracellular transfer of ceramide-1-phosphate (C1P) between organelle membranes and the cell membrane. Required for normal structure of the Golgi stacks. Can bind phosphoceramides with a variety of aliphatic chains, but has a preference for lipids with saturated C16:0 or monounsaturated C18:1 aliphatic chains, and is inefficient with phosphoceramides containing lignoceryl (C24:0). Plays a role in the regulation of the cellular levels of ceramide-1-phosphate, and thereby contributes to the regulation of phospholipase PLA2G4A activity and the release of arachidonic acid. Has no activity with galactosylceramide, lactosylceramide, sphingomyelin, phosphatidylcholine, phosphatidic acid and ceramide. C1P transfer is stimulated by phosphatidylserine in C1P source vesicles. Regulates autophagy, inflammasome mediated IL1B and IL18 processing, and pyroptosis, but not apoptosis. The protein is Ceramide-1-phosphate transfer protein of Mus musculus (Mouse).